Reading from the N-terminus, the 648-residue chain is RAF proto-oncogene serine/threonine-protein kinase (648 aa).

Residue Ser29 is modified to Phosphoserine; by MAPK1. Residue Ser43 is modified to Phosphoserine; by PKA and MAPK1. Positions 56 to 131 (NTIRVFLPNK…IGEELQVDFL (76 aa)) constitute an RBD domain. The segment at 138–184 (THNFARKTFLKLAFCDICQKFLLNGFRCQTCGYKFHEHCSTKVPTMC) adopts a Phorbol-ester/DAG-type zinc-finger fold. Zn(2+)-binding residues include His139, Cys152, Cys155, Cys165, Cys168, His173, Cys176, and Cys184. Residues 205–265 (GVPAPPSFPM…RSTSTPNVHM (61 aa)) form a disordered region. The residue at position 233 (Ser233) is a Phosphoserine; by PKA. The segment covering 239-265 (TFNTSSPSSEGSLSQRQRSTSTPNVHM) has biased composition (polar residues). Ser252 carries the phosphoserine modification. Ser259 is subject to Phosphoserine; by PKA, PKC and PKB/AKT1. Position 268 is a phosphothreonine; by autocatalysis (Thr268). A Phosphothreonine; by PKA modification is found at Thr269. The tract at residues 281–335 (IRSHSESASPSALSSSPNNLSPTGWSQPKTPVPAQRERAPGSGTQEKNKIRPRGQ) is disordered. Positions 286 to 301 (ESASPSALSSSPNNLS) are enriched in low complexity. A phosphoserine; by MAPK1 mark is found at Ser289, Ser296, and Ser301. An interaction with PEBP1/RKIP region spans residues 331 to 349 (RPRGQRDSSYYWEIEASEV). The residue at position 338 (Ser338) is a Phosphoserine; by PAK1, PAK2, PAK3 and PAK5. Position 339 is a phosphoserine; by PAK1, PAK2 and PAK3 (Ser339). 2 positions are modified to phosphotyrosine; by SRC: Tyr340 and Tyr341. Residues 349-609 (VMLSTRIGSG…PQILSSIELL (261 aa)) enclose the Protein kinase domain. Residues 355 to 363 (IGSGSFGTV) and Lys375 each bind ATP. Asp468 serves as the catalytic Proton acceptor. The residue at position 471 (Ser471) is a Phosphoserine. Thr491 carries the phosphothreonine modification. Phosphoserine is present on Ser494. Phosphoserine; by PKC is present on residues Ser497 and Ser499. Position 563 is a symmetric dimethylarginine; by PRMT5 (Arg563). At Ser621 the chain carries Phosphoserine. Position 642 is a phosphoserine; by MAPK1 (Ser642).

This sequence belongs to the protein kinase superfamily. TKL Ser/Thr protein kinase family. RAF subfamily. In terms of assembly, monomer. Homodimer. Heterodimerizes with BRAF and this heterodimer possesses a highly increased kinase activity compared to the respective homodimers or monomers. Heterodimerization is mitogen-regulated and enhanced by 14-3-3 proteins. MAPK1/ERK2 activation can induce a negative feedback that promotes the dissociation of the heterodimer. Forms a multiprotein complex with Ras (M-Ras/MRAS), SHOC2 and protein phosphatase 1 (PPP1CA, PPP1CB and PPP1CC). Interacts with LZTR1. Interacts with Ras proteins; the interaction is antagonized by RIN1. Weakly interacts with RIT1. Interacts (via N-terminus) with RGS14 (via RBD domains); the interaction mediates the formation of a ternary complex with BRAF, a ternary complex inhibited by GNAI1. Probably forms a complex composed of chaperones HSP90 and HSP70, co-chaperones CDC37, PPP5C, TSC1 and client protein TSC2, CDK4, AKT, RAF1 and NR3C1; this complex does not contain co-chaperones STIP1/HOP and PTGES3/p23. Interacts with STK3/MST2; the interaction inhibits its pro-apoptotic activity. Interacts (when phosphorylated at Ser-259) with YWHAZ (unphosphorylated at 'Thr-232'). Interacts with MAP2K1/MEK1 and MAP2K2/MEK2. Interacts with MAP3K5/ASF1 (via N-terminus) and this interaction inhibits the proapoptotic function of MAP3K5/ASK1. Interacts with PAK1 (via kinase domain). The Ser-338 and Ser-339 phosphorylated form (by PAK1) interacts with BCL2. Interacts with PEBP1/RKIP and this interaction is enhanced if RAF1 is phosphorylated on residues Ser-338, Ser-339, Tyr-340 and Tyr-341. Interacts with ADCY2, ADCY5, ADCY6, DGKH, RCAN1/DSCR1, PPP1R12A, PKB/AKT1, SPRY2, SPRY4, CNKSR1/CNK1, KSR2 and PHB/prohibitin. The phosphorylated form interacts with PIN1. Interacts with PPP2CA, PPP2R1B and ROCK2. In its active form, interacts with PRMT5. Interacts with FAM83B; displaces 14-3-3 proteins from RAF1 and activates RAF1. Interacts with PDE8A; the interaction promotes RAF1 activity. Interacts with MFHAS1. Interacts with GLS. Interacts with NEK10 and MAP2K1; the interaction is direct with NEK10 and required for ERK1/2-signaling pathway activation in response to UV irradiation. Zn(2+) is required as a cofactor. Post-translationally, phosphorylation at Thr-269, Ser-338, Tyr-341, Thr-491 and Ser-494 results in its activation. Phosphorylation at Ser-29, Ser-43, Ser-289, Ser-296, Ser-301 and Ser-642 by MAPK1/ERK2 results in its inactivation. Phosphorylation at Ser-259 induces the interaction with YWHAZ and inactivates kinase activity. Dephosphorylation of Ser-259 by the SHOC2-MRAS-PP1c (SMP) complex consisting of SHOC2, GTP-bound M-Ras/MRAS and the catalytic subunit of protein phosphatase 1 (PPP1CA, PPP1CB or PPP1CC); this relieves inactivation and stimulates kinase activity. Phosphorylation at Ser-338 by PAK1 and PAK5 and Ser-339 by PAK1 is required for its mitochondrial localization. Phosphorylation at Ser-621 in response to growth factor treatment stabilizes the protein, possibly by preventing proteasomal degradation. Phosphorylation at Ser-289, Ser-296, Ser-301, Ser-338 and Ser-621 are somehow linked to the methylation potential of cells. Treatment of cells with HGF in the presence of the methylation inhibitor 5'-methylthioadenosine (MTA) results in increased phosphorylation at Ser-338 and Ser-621 and decreased phosphorylation at Ser-296, Ser-301 and Ser-338. Dephosphorylation at Ser-338 by PPP5C results in a decreased of activity. In terms of processing, methylated at Arg-563 in response to EGF treatment. This modification leads to destabilization of the protein, possibly through proteasomal degradation. As to expression, present in all tissues tested: testis, ovary, small intestine, colon, peripheral blood leukocytes, fetal liver, bone marrow, thymus, lymph node and spleen, and the cell lines melanoma G-361, lung carcinoma A-549, colorectal adenocarcinoma SW480, Burkitt's lymphoma Raji and lymphoblastic leukemia MOLT-4. In skeletal muscle, isoform 1 is more abundant than isoform 2.

The protein localises to the cytoplasm. Its subcellular location is the cell membrane. It is found in the mitochondrion. The protein resides in the nucleus. It carries out the reaction L-seryl-[protein] + ATP = O-phospho-L-seryl-[protein] + ADP + H(+). The catalysed reaction is L-threonyl-[protein] + ATP = O-phospho-L-threonyl-[protein] + ADP + H(+). With respect to regulation, regulation is a highly complex process involving membrane recruitment, protein-protein interactions, dimerization, and phosphorylation/dephosphorylation events. Ras-GTP recruits RAF1 to the membrane, thereby promoting its activation. The inactive conformation of RAF1 is maintained by autoinhibitory interactions occurring between the N-terminal regulatory and the C-terminal catalytic domains and by the binding of a 14-3-3 protein that contacts two phosphorylation sites, Ser-259 and Ser-621. Upon mitogenic stimulation, Ras and PPP2R1A cooperate to release autoinhibition and the subsequent phosphorylation of activating sites: Ser-338, Tyr-341, Thr-491, and Ser-494, yields a fully active kinase. Through a negative feedback mechanism involving MAPK1/ERK2, RAF1 is phosphorylated on Ser-29, Ser-43, Ser-289, Ser-296, Ser-301 and Ser-642 by MAPK1/ERK2, which yields an inactive, desensitized kinase. The signaling-competent conformation of RAF1 is finally re-established by the coordinated action of PIN1, a prolyl isomerase that converts pSer and pThr residues from the cis to the trans conformation, which is preferentially recognized and dephosphorylated by PPP2R1A. Activated by homodimerization and heterodimerization (with BRAF). Also regulated through association with other proteins such as KSR2, CNKSR1/CNK1, PEBP1/RKIP, PHB/prohibitin and SPRY4. PEBP1/RKIP acts by dissociating RAF1 from its substrates MAP2K1/MEK1 and MAP2K2/MEK2. PHB/prohibitin facilitates the displacement of 14-3-3 from RAF1 by activated Ras, thereby promoting cell membrane localization and phosphorylation of RAF1 at the activating Ser-338. SPRY4 inhibits Ras-independent, but not Ras-dependent, activation of RAF1. CNKSR1/CNK1 regulates Src-mediated RAF1 activation. Its function is as follows. Serine/threonine-protein kinase that acts as a regulatory link between the membrane-associated Ras GTPases and the MAPK/ERK cascade, and this critical regulatory link functions as a switch determining cell fate decisions including proliferation, differentiation, apoptosis, survival and oncogenic transformation. RAF1 activation initiates a mitogen-activated protein kinase (MAPK) cascade that comprises a sequential phosphorylation of the dual-specific MAPK kinases (MAP2K1/MEK1 and MAP2K2/MEK2) and the extracellular signal-regulated kinases (MAPK3/ERK1 and MAPK1/ERK2). The phosphorylated form of RAF1 (on residues Ser-338 and Ser-339, by PAK1) phosphorylates BAD/Bcl2-antagonist of cell death at 'Ser-75'. Phosphorylates adenylyl cyclases: ADCY2, ADCY5 and ADCY6, resulting in their activation. Phosphorylates PPP1R12A resulting in inhibition of the phosphatase activity. Phosphorylates TNNT2/cardiac muscle troponin T. Can promote NF-kB activation and inhibit signal transducers involved in motility (ROCK2), apoptosis (MAP3K5/ASK1 and STK3/MST2), proliferation and angiogenesis (RB1). Can protect cells from apoptosis also by translocating to the mitochondria where it binds BCL2 and displaces BAD/Bcl2-antagonist of cell death. Plays a role in the oncogenic transformation of epithelial cells via repression of the TJ protein, occludin (OCLN) by inducing the up-regulation of a transcriptional repressor SNAI2/SLUG, which induces down-regulation of OCLN. Restricts caspase activation in response to selected stimuli, notably Fas stimulation, pathogen-mediated macrophage apoptosis, and erythroid differentiation. Regulates Rho signaling and migration, and is required for normal wound healing. The polypeptide is RAF proto-oncogene serine/threonine-protein kinase (Raf1) (Mus musculus (Mouse)).